A 504-amino-acid chain; its full sequence is Cytochrome P450 2D9 (504 aa).

S249 is subject to Phosphoserine. Residue C446 coordinates heme.

Belongs to the cytochrome P450 family. Heme serves as cofactor.

The protein localises to the endoplasmic reticulum membrane. It is found in the microsome membrane. It catalyses the reaction an organic molecule + reduced [NADPH--hemoprotein reductase] + O2 = an alcohol + oxidized [NADPH--hemoprotein reductase] + H2O + H(+). Functionally, cytochromes P450 are a group of heme-thiolate monooxygenases. In liver microsomes, this enzyme is involved in an NADPH-dependent electron transport pathway. It oxidizes a variety of structurally unrelated compounds, including steroids, fatty acids, and xenobiotics. In Mus musculus (Mouse), this protein is Cytochrome P450 2D9 (Cyp2d9).